We begin with the raw amino-acid sequence, 388 residues long: Leucine aminopeptidase 1 (388 aa).

A signal peptide spans 1 to 19 (MKVLTAIALSAIAFTGAVA). Residues 20–88 (AVITQEAFLN…YPTLHSASYV (69 aa)) constitute a propeptide that is removed on maturation. Asparagine 106 and asparagine 180 each carry an N-linked (GlcNAc...) asparagine glycan. Residues histidine 188 and aspartate 207 each coordinate Zn(2+). N-linked (GlcNAc...) asparagine glycosylation is present at asparagine 232. 2 residues coordinate Zn(2+): glutamate 246 and aspartate 273. Cysteine 322 and cysteine 326 are joined by a disulfide. Histidine 355 contacts Zn(2+).

Belongs to the peptidase M28 family. M28E subfamily. Monomer. The cofactor is Zn(2+).

Its subcellular location is the secreted. Its function is as follows. Extracellular aminopeptidase that allows assimilation of proteinaceous substrates and which contributes to pathogenicity. The polypeptide is Leucine aminopeptidase 1 (lap1) (Aspergillus fumigatus (strain CBS 144.89 / FGSC A1163 / CEA10) (Neosartorya fumigata)).